The chain runs to 792 residues: Putative cellulose synthase-like protein H3 (792 aa).

2 helical membrane-spanning segments follow: residues 25–45 and 55–75; these read AWML…VRRA and VGGA…FVWL. A disordered region spans residues 132–154; it reads GRHVRDDGGPGARAAGGDGEQGA. A compositionally biased stretch (gly residues) spans 140–151; the sequence is GPGARAAGGDGE. Residues Asp-181 and Asp-501 contribute to the active site. Helical transmembrane passes span 579-599, 613-632, 650-670, 706-726, 739-759, and 768-788; these read VWAV…YCLL, FNIT…VEYM, IISA…TIGL, VFIP…IGTW, GPGI…LPFV, and YGIP…FLFC.

This sequence belongs to the glycosyltransferase 2 family. Plant cellulose synthase-like H subfamily.

The protein localises to the golgi apparatus membrane. Functionally, thought to be a Golgi-localized beta-glycan synthase that polymerize the backbones of noncellulosic polysaccharides (hemicelluloses) of plant cell wall. The sequence is that of Putative cellulose synthase-like protein H3 (CSLH3) from Oryza sativa subsp. japonica (Rice).